The sequence spans 227 residues: Ribosomal RNA large subunit methyltransferase E (227 aa).

S-adenosyl-L-methionine contacts are provided by G78, W80, D103, D119, and D143. Catalysis depends on K183, which acts as the Proton acceptor.

It belongs to the class I-like SAM-binding methyltransferase superfamily. RNA methyltransferase RlmE family.

Its subcellular location is the cytoplasm. The enzyme catalyses uridine(2552) in 23S rRNA + S-adenosyl-L-methionine = 2'-O-methyluridine(2552) in 23S rRNA + S-adenosyl-L-homocysteine + H(+). In terms of biological role, specifically methylates the uridine in position 2552 of 23S rRNA at the 2'-O position of the ribose in the fully assembled 50S ribosomal subunit. In Rickettsia conorii (strain ATCC VR-613 / Malish 7), this protein is Ribosomal RNA large subunit methyltransferase E.